Here is a 399-residue protein sequence, read N- to C-terminus: Methylthioribose kinase (399 aa).

ATP contacts are provided by residues Asn-40, Lys-57, and 111 to 113; that span reads EDL. Substrate is bound at residue Asp-229. An ATP-binding site is contributed by 246 to 248; the sequence is DAE. Residue Arg-344 coordinates substrate.

The protein belongs to the methylthioribose kinase family. Homodimer.

The catalysed reaction is 5-(methylsulfanyl)-D-ribose + ATP = 5-(methylsulfanyl)-alpha-D-ribose 1-phosphate + ADP + H(+). It functions in the pathway amino-acid biosynthesis; L-methionine biosynthesis via salvage pathway; S-methyl-5-thio-alpha-D-ribose 1-phosphate from S-methyl-5'-thioadenosine (hydrolase route): step 2/2. Catalyzes the phosphorylation of methylthioribose into methylthioribose-1-phosphate. The chain is Methylthioribose kinase from Enterobacter sp. (strain 638).